Here is a 545-residue protein sequence, read N- to C-terminus: CTP synthase (545 aa).

The segment at 1–266 (MTTNYIFVTG…DDYICKRFSL (266 aa)) is amidoligase domain. Ser14 serves as a coordination point for CTP. Residue Ser14 coordinates UTP. Residues 15 to 20 (SLGKGI) and Asp72 contribute to the ATP site. Positions 72 and 140 each coordinate Mg(2+). CTP contacts are provided by residues 147-149 (DIE), 187-192 (KTKPTQ), and Lys223. UTP is bound by residues 187 to 192 (KTKPTQ) and Lys223. 239-241 (KDV) lines the ATP pocket. The Glutamine amidotransferase type-1 domain occupies 291-542 (TIGMVGKYIE…VKAASEFQKR (252 aa)). Gly352 contacts L-glutamine. The Nucleophile; for glutamine hydrolysis role is filled by Cys379. Residues 380 to 383 (LGMQ), Glu403, and Arg470 each bind L-glutamine. Residues His515 and Glu517 contribute to the active site.

It belongs to the CTP synthase family. As to quaternary structure, homotetramer.

It catalyses the reaction UTP + L-glutamine + ATP + H2O = CTP + L-glutamate + ADP + phosphate + 2 H(+). It carries out the reaction L-glutamine + H2O = L-glutamate + NH4(+). The enzyme catalyses UTP + NH4(+) + ATP = CTP + ADP + phosphate + 2 H(+). It functions in the pathway pyrimidine metabolism; CTP biosynthesis via de novo pathway; CTP from UDP: step 2/2. With respect to regulation, allosterically activated by GTP, when glutamine is the substrate; GTP has no effect on the reaction when ammonia is the substrate. The allosteric effector GTP functions by stabilizing the protein conformation that binds the tetrahedral intermediate(s) formed during glutamine hydrolysis. Inhibited by the product CTP, via allosteric rather than competitive inhibition. Its function is as follows. Catalyzes the ATP-dependent amination of UTP to CTP with either L-glutamine or ammonia as the source of nitrogen. Regulates intracellular CTP levels through interactions with the four ribonucleotide triphosphates. The protein is CTP synthase of Shigella boydii serotype 18 (strain CDC 3083-94 / BS512).